A 158-amino-acid polypeptide reads, in one-letter code: Putative ribonucleoside-diphosphate reductase small chain B (158 aa).

This sequence belongs to the ribonucleoside diphosphate reductase small chain family.

This is Putative ribonucleoside-diphosphate reductase small chain B (RNR2B) from Arabidopsis thaliana (Mouse-ear cress).